The primary structure comprises 1024 residues: Beta-galactosidase (1024 aa).

Substrate contacts are provided by N103 and D202. Na(+) is bound at residue D202. 3 residues coordinate Mg(2+): E417, H419, and E462. Residues E462 and 538-541 (EYAH) each bind substrate. The Proton donor role is filled by E462. E538 serves as the catalytic Nucleophile. Mg(2+) is bound at residue N598. 2 residues coordinate Na(+): F602 and N605. The substrate site is built by N605 and W1000.

It belongs to the glycosyl hydrolase 2 family. As to quaternary structure, homotetramer. The cofactor is Mg(2+). Na(+) is required as a cofactor.

It carries out the reaction Hydrolysis of terminal non-reducing beta-D-galactose residues in beta-D-galactosides.. This is Beta-galactosidase from Escherichia coli O157:H7.